Here is a 445-residue protein sequence, read N- to C-terminus: Methylenetetrahydrofolate--tRNA-(uracil-5-)-methyltransferase TrmFO (445 aa).

10-15 is a binding site for FAD; the sequence is GGGLSG.

The protein belongs to the MnmG family. TrmFO subfamily. The cofactor is FAD.

The protein resides in the cytoplasm. It catalyses the reaction uridine(54) in tRNA + (6R)-5,10-methylene-5,6,7,8-tetrahydrofolate + NADH + H(+) = 5-methyluridine(54) in tRNA + (6S)-5,6,7,8-tetrahydrofolate + NAD(+). It carries out the reaction uridine(54) in tRNA + (6R)-5,10-methylene-5,6,7,8-tetrahydrofolate + NADPH + H(+) = 5-methyluridine(54) in tRNA + (6S)-5,6,7,8-tetrahydrofolate + NADP(+). Functionally, catalyzes the folate-dependent formation of 5-methyl-uridine at position 54 (M-5-U54) in all tRNAs. This chain is Methylenetetrahydrofolate--tRNA-(uracil-5-)-methyltransferase TrmFO, found in Lawsonia intracellularis (strain PHE/MN1-00).